The chain runs to 117 residues: 16 kDa protein (117 aa).

In Tobacco rattle virus (strain PLB), this protein is 16 kDa protein.